A 238-amino-acid chain; its full sequence is Ion-translocating oxidoreductase complex subunit E (238 aa).

A run of 6 helical transmembrane segments spans residues Ala-24–Val-44, Leu-52–Met-72, Val-84–Met-104, Glu-106–Gly-126, Ile-141–Ile-161, and Gly-195–Ala-215.

This sequence belongs to the NqrDE/RnfAE family. The complex is composed of six subunits: RnfA, RnfB, RnfC, RnfD, RnfE and RnfG.

The protein localises to the cell inner membrane. In terms of biological role, part of a membrane-bound complex that couples electron transfer with translocation of ions across the membrane. In Azotobacter vinelandii (strain DJ / ATCC BAA-1303), this protein is Ion-translocating oxidoreductase complex subunit E.